Consider the following 325-residue polypeptide: MQQSTGAATSSAADSGMGATDLVSRCVGDGGGGGGNSCSGGSSDPAAINTTISSKQADAREPQEQQVAIHYLASFHELCVVTALLPLVTLFTCFVTAYVFQYDDVHETHCRVYNIIPSISAITGVSPQRYFWRFSIALHIGPRIPIAFVYKNYYRSQLRRISPAQVPQTSLLITLILVLNCIEIASLGGVTYISNRENYPVHERIFITFMVCSLCYMLATIKLNGILNAGQALSEKQLLSIKWKKILFAVSILSTVGLLVFFAKHRFYCHDLAFSWFAFFEYLIAIANMLFHFTIIWDFPSQFMMIVQGPRENLAQYLSNRPKLD.

Helical transmembrane passes span 80 to 100, 130 to 150, 171 to 191, 205 to 225, 243 to 263, and 276 to 296; these read VVTA…AYVF, YFWR…AFVY, LLIT…GGVT, IFIT…KLNG, WKKI…VFFA, and WFAF…FTII.

Belongs to the PGAP2 family.

It is found in the membrane. The chain is Post-GPI attachment to proteins factor 2-like from Drosophila melanogaster (Fruit fly).